The sequence spans 136 residues: Autophagy-related protein 41 (136 aa).

The interval 127–136 is ATG9-binding; sequence QNYRLWLSSV.

Interacts with ATG9.

Its subcellular location is the preautophagosomal structure membrane. Involved in both selective and non-selective autophagy. Does not appear to play a role in determining the size of autophagosomes, but rather influences their formation rate. With ATG9, plays a role in the delivery of donor membrane to expanding phagophore. The protein is Autophagy-related protein 41 of Saccharomyces cerevisiae (strain ATCC 204508 / S288c) (Baker's yeast).